Consider the following 666-residue polypeptide: Frizzled-3 (666 aa).

A signal peptide spans 1–22 (MAVSWIVFDLWLLTVFLGQIGG). The FZ domain occupies 23–136 (HSLFSCEPIT…CSRFPDCDEP (114 aa)). Residues 23 to 205 (HSLFSCEPIT…REELSFARYF (183 aa)) are Extracellular-facing. Cystine bridges form between C28–C89, C36–C82, C73–C110, C99–C133, and C103–C127. An N-linked (GlcNAc...) asparagine glycan is attached at N42. A helical transmembrane segment spans residues 206-226 (IGLISIICLSATLFTFLTFLI). Over 227–237 (DVTRFRYPERP) the chain is Cytoplasmic. Residues 238-258 (IIFYAVCYMMVSLIFFIGFLL) traverse the membrane as a helical segment. Over 259-288 (EDRVACNASSPAQYKASTVTQGSHNKACTM) the chain is Extracellular. The N-linked (GlcNAc...) asparagine glycan is linked to N265. Residues 289 to 309 (LFMVLYFFTMAGSVWWVILTI) form a helical membrane-spanning segment. The Cytoplasmic segment spans residues 310–328 (TWFLAAVPKWGSEAIEKKA). A helical transmembrane segment spans residues 329 to 349 (LLFHASAWGIPGTLTIILLAM). Over 350–374 (NKIEGDNISGVCFVGLYDVDALRYF) the chain is Extracellular. Residue N356 is glycosylated (N-linked (GlcNAc...) asparagine). A helical membrane pass occupies residues 375 to 395 (VLAPLCLYVVVGVSLLLAGII). Residues 396 to 420 (SLNRVRIEIPLEKENQDKLVKFMIR) lie on the Cytoplasmic side of the membrane. A helical transmembrane segment spans residues 421 to 441 (IGVFSILYLVPLLVVIGCYFY). At 442–477 (EQAYRGIWETTWIQERCREYHIPCPYQVTQMSRPDL) the chain is on the extracellular side. Residues 478-498 (ILFLMKYLMALIVGIPSIFWV) form a helical membrane-spanning segment. Residues 499-666 (GSKKTCFEWA…RVIEEDGTSA (168 aa)) are Cytoplasmic-facing. The Lys-Thr-X-X-X-Trp motif, mediates interaction with the PDZ domain of Dvl family members signature appears at 502–507 (KTCFEW). The disordered stretch occupies residues 538–666 (RDPNTPIIRK…RVIEEDGTSA (129 aa)). The span at 550-565 (GTSTQGTSTHASSTQL) shows a compositional bias: polar residues. Positions 617–638 (LTDHSRHSSSHRLNEQSRHSSI) are enriched in basic and acidic residues. Residues 639–656 (RDLSNNPMTHITHGTSMN) are compositionally biased toward polar residues.

Belongs to the G-protein coupled receptor Fz/Smo family. As to quaternary structure, interacts with VANGL2. Ubiquitinated by ZNRF3, leading to its degradation by the proteasome. In terms of tissue distribution, expressed in the cortex, diencephalon, rostral brainstem and little or no staining is seen in the striatum or cerebellum. Expressed in both hair cells and supporting cells in the utricle, saccule, cristae and the organ of Corti in the inner ear (at protein level). Highly expressed in the CNS. In skin, it is restricted to the epidermis and to the developing hair follicle.

The protein localises to the membrane. It localises to the cell membrane. Its subcellular location is the cell surface. The protein resides in the apical cell membrane. Its function is as follows. Receptor for Wnt proteins. Most of frizzled receptors are coupled to the beta-catenin canonical signaling pathway, which leads to the activation of disheveled proteins, inhibition of GSK-3 kinase, nuclear accumulation of beta-catenin and activation of Wnt target genes. A second signaling pathway involving PKC and calcium fluxes has been seen for some family members, but it is not yet clear if it represents a distinct pathway or if it can be integrated in the canonical pathway, as PKC seems to be required for Wnt-mediated inactivation of GSK-3 kinase. Both pathways seem to involve interactions with G-proteins. Activation by Wnt5A stimulates PKC activity via a G-protein-dependent mechanism. Involved in transduction and intercellular transmission of polarity information during tissue morphogenesis and/or in differentiated tissues. Plays a role in controlling early axon growth and guidance processes necessary for the formation of a subset of central and peripheral major fiber tracts. Required for the development of major fiber tracts in the central nervous system, including: the anterior commissure, the corpus callosum, the thalamocortical, corticothalamic and nigrostriatal tracts, the corticospinal tract, the fasciculus retroflexus, the mammillothalamic tract, the medial lemniscus, and ascending fiber tracts from the spinal cord to the brain. In the peripheral nervous system, controls axon growth in distinct populations of cranial and spinal motor neurons, including the facial branchimotor nerve, the hypoglossal nerve, the phrenic nerve, and motor nerves innervating dorsal limbs. Involved in the migration of cranial neural crest cells. May also be implicated in the transmission of sensory information from the trunk and limbs to the brain. Controls commissural sensory axons guidance after midline crossing along the anterior-posterior axis in the developing spinal cord in a Wnt-dependent signaling pathway. Together with FZD6, is involved in the neural tube closure and plays a role in the regulation of the establishment of planar cell polarity (PCP), particularly in the orientation of asymmetric bundles of stereocilia on the apical faces of a subset of auditory and vestibular sensory cells located in the inner ear. Promotes neurogenesis by maintaining sympathetic neuroblasts within the cell cycle in a beta-catenin-dependent manner. This Mus musculus (Mouse) protein is Frizzled-3 (Fzd3).